A 1775-amino-acid polypeptide reads, in one-letter code: Protein TIC 214 (1775 aa).

Transmembrane regions (helical) follow at residues 19-39 (IINSVVVVGLYYGFLTTFSIG), 68-88 (FIAGQLMMFISIYYAPLHLAL), 91-111 (PHTITVLALPYLLFHFFWNNH), 133-153 (VFLNNLIFQLFNHFILPSSML), 176-196 (VGWLIGHILFMKWVGLVLVWI), and 227-247 (IFSILLFITCVYYLGRIPSPI). The tract at residues 1491–1512 (KESAGQGERESDNEKKKNLESA) is disordered.

It belongs to the TIC214 family. Part of the Tic complex.

The protein localises to the plastid. Its subcellular location is the chloroplast inner membrane. Involved in protein precursor import into chloroplasts. May be part of an intermediate translocation complex acting as a protein-conducting channel at the inner envelope. The sequence is that of Protein TIC 214 from Lobularia maritima (Sweet alyssum).